Consider the following 493-residue polypeptide: MPPAIGGPVGYTPPDGGWGWAVLVGAFISIGFSYAFPKSITVFFKEIEVIFSATTSEVSWISSIMLAVMYAGGPISSILVNKYGSRPVMIAGGCLSGCGLIAASFCNTVQELYLCIGVIGGLGLAFNLNPALTMIGKYFYKKRPLANGLAMAGSPVFLSTLAPLNQAFFDIFDWRGSFLILGGLLLNCCVAGSLMRPIGPEQVKLEKLKSKESLQEAGKSDANTDLIGGSPKGEKLSVFQTINKFLDLSLFTHRGFLLYLSGNVVMFFGLFTPLVFLSSYGKSKDFSSEKSAFLLSILAFVDMVARPSMGLAANTKWIRPRIQYFFAASVVANGVCHLLAPLSTTYVGFCVYAGVFGFAFGWLSSVLFETLMDLIGPQRFSSAVGLVTIVECCPVLLGPPLLGRLNDMYGDYKYTYWACGVILIIAGIYLFIGMGINYRLLAKEQKAEEKQKREGKEDEASTDVDEKPKETMKAAQSPQQHSSGDPTEEESPV.

Residues 1 to 22 lie on the Cytoplasmic side of the membrane; sequence MPPAIGGPVGYTPPDGGWGWAV. Residues 23-44 traverse the membrane as a helical segment; sequence LVGAFISIGFSYAFPKSITVFF. Lys38 contributes to the (S)-lactate binding site. Residues 45–55 are Extracellular-facing; it reads KEIEVIFSATT. The helical transmembrane segment at 56–80 threads the bilayer; that stretch reads SEVSWISSIMLAVMYAGGPISSILV. Residues 81 to 84 are Cytoplasmic-facing; it reads NKYG. The chain crosses the membrane as a helical span at residues 85 to 105; it reads SRPVMIAGGCLSGCGLIAASF. Over 106–109 the chain is Extracellular; sequence CNTV. The chain crosses the membrane as a helical span at residues 110-132; that stretch reads QELYLCIGVIGGLGLAFNLNPAL. Residues 133–146 lie on the Cytoplasmic side of the membrane; it reads TMIGKYFYKKRPLA. A helical transmembrane segment spans residues 147–169; it reads NGLAMAGSPVFLSTLAPLNQAFF. Residues 170–174 lie on the Extracellular side of the membrane; the sequence is DIFDW. Residues 175-194 traverse the membrane as a helical segment; that stretch reads RGSFLILGGLLLNCCVAGSL. Residues 195 to 254 lie on the Cytoplasmic side of the membrane; it reads MRPIGPEQVKLEKLKSKESLQEAGKSDANTDLIGGSPKGEKLSVFQTINKFLDLSLFTHR. Phosphoserine occurs at positions 210, 213, and 220. Thr224 is subject to Phosphothreonine. A Phosphoserine modification is found at Ser230. A helical membrane pass occupies residues 255–281; that stretch reads GFLLYLSGNVVMFFGLFTPLVFLSSYG. At 282-288 the chain is on the extracellular side; sequence KSKDFSS. A helical transmembrane segment spans residues 289 to 310; sequence EKSAFLLSILAFVDMVARPSMG. Position 302 (Asp302) interacts with H(+). Position 306 (Arg306) interacts with (S)-lactate. Topologically, residues 311–321 are cytoplasmic; that stretch reads LAANTKWIRPR. A helical membrane pass occupies residues 322-342; sequence IQYFFAASVVANGVCHLLAPL. The Extracellular segment spans residues 343–346; that stretch reads STTY. A helical transmembrane segment spans residues 347–368; the sequence is VGFCVYAGVFGFAFGWLSSVLF. At 369–382 the chain is on the cytoplasmic side; it reads ETLMDLIGPQRFSS. Residues 383-403 traverse the membrane as a helical segment; the sequence is AVGLVTIVECCPVLLGPPLLG. The Extracellular portion of the chain corresponds to 404 to 414; that stretch reads RLNDMYGDYKY. A helical membrane pass occupies residues 415–436; sequence TYWACGVILIIAGIYLFIGMGI. At 437 to 493 the chain is on the cytoplasmic side; that stretch reads NYRLLAKEQKAEEKQKREGKEDEASTDVDEKPKETMKAAQSPQQHSSGDPTEEESPV. Basic and acidic residues predominate over residues 447 to 472; sequence AEEKQKREGKEDEASTDVDEKPKETM. The disordered stretch occupies residues 447-493; it reads AEEKQKREGKEDEASTDVDEKPKETMKAAQSPQQHSSGDPTEEESPV. Position 461 is a phosphoserine (Ser461). Position 462 is a phosphothreonine (Thr462). Polar residues predominate over residues 474–485; the sequence is AAQSPQQHSSGD. Phosphoserine occurs at positions 477, 482, 483, and 491.

This sequence belongs to the major facilitator superfamily. Monocarboxylate porter (TC 2.A.1.13) family. Interacts with isoform 2 of BSG; interaction mediates SLC16A1 targeting to the plasma membrane. Interacts with EMB; interaction mediates SLC16A1 targeting to the plasma membrane. As to expression, detected in liver, brain, spinal cord, spermatozoa, muscle, white adipose tissue and brown adipose tissue (at protein level). Widely expressed, except in pancreas, where expression is not detectable.

Its subcellular location is the cell membrane. It localises to the basolateral cell membrane. The protein resides in the apical cell membrane. The catalysed reaction is (S)-lactate(in) + H(+)(in) = (S)-lactate(out) + H(+)(out). The enzyme catalyses acetate(out) + H(+)(out) = acetate(in) + H(+)(in). It carries out the reaction acetoacetate(out) + H(+)(out) = acetoacetate(in) + H(+)(in). It catalyses the reaction pyruvate(out) + H(+)(out) = pyruvate(in) + H(+)(in). The catalysed reaction is (R)-3-hydroxybutanoate(out) + H(+)(out) = (R)-3-hydroxybutanoate(in) + H(+)(in). The enzyme catalyses 3-methyl-2-oxobutanoate(out) + H(+)(out) = 3-methyl-2-oxobutanoate(in) + H(+)(in). It carries out the reaction 4-methyl-2-oxopentanoate(out) + H(+)(out) = 4-methyl-2-oxopentanoate(in) + H(+)(in). It catalyses the reaction succinate(in) + 2 H(+)(in) = succinate(out) + 2 H(+)(out). In terms of biological role, bidirectional proton-coupled monocarboxylate transporter. Catalyzes the rapid transport across the plasma membrane of many monocarboxylates such as lactate, pyruvate, acetate and the ketone bodies acetoacetate and beta-hydroxybutyrate, and thus contributes to the maintenance of intracellular pH. The transport direction is determined by the proton motive force and the concentration gradient of the substrate monocarboxylate. MCT1 is a major lactate exporter. Plays a role in cellular responses to a high-fat diet by modulating the cellular levels of lactate and pyruvate that contribute to the regulation of central metabolic pathways and insulin secretion, with concomitant effects on plasma insulin levels and blood glucose homeostasis. Facilitates the protonated monocarboxylate form of succinate export, that its transient protonation upon muscle cell acidification in exercising muscle and ischemic heart. Functions via alternate outward- and inward-open conformation states. Protonation and deprotonation of 302-Asp is essential for the conformational transition. This is Monocarboxylate transporter 1 (Slc16a1) from Mus musculus (Mouse).